We begin with the raw amino-acid sequence, 84 residues long: Small nuclear ribonucleoprotein E (84 aa).

The 72-residue stretch at 13-84 (INFIFKLLQQ…GDNITLIQAI (72 aa)) folds into the Sm domain.

This sequence belongs to the snRNP Sm proteins family. In terms of assembly, component of the Sm core complex, present in spliceosomal snRNP U1, U2, U4/U6 and U5. The core complex contains smb1, smd1, smd2, smd3, sme1, smf1 and smg1 (Sm proteins B, D1, D2, D3, E, F and G, respectively), and is probably a heptameric ring structure.

The protein localises to the cytoplasm. The protein resides in the nucleus. Involved in pre-mRNA splicing. Binds and is required for the stability of snRNA U1, U2, U4 and U5 which contain a highly conserved structural motif called the Sm binding site. Involved in cap modification. The protein is Small nuclear ribonucleoprotein E of Schizosaccharomyces pombe (strain 972 / ATCC 24843) (Fission yeast).